The primary structure comprises 288 residues: Probable ketoamine kinase SAOUHSC_02908 (288 aa).

86-88 is a binding site for ATP; the sequence is TYL. Asp191 (proton acceptor) is an active-site residue.

Belongs to the fructosamine kinase family.

It carries out the reaction N(6)-(D-ribulosyl)-L-lysine + ATP = N(6)-(3-O-phospho-D-ribulosyl)-L-lysine + ADP + H(+). It catalyses the reaction N(6)-(D-erythrulosyl)-L-lysine + ATP = N(6)-(3-O-phospho-D-erythrulosyl)-L-lysine + ADP + H(+). The catalysed reaction is N(6)-D-ribulosyl-L-lysyl-[protein] + ATP = N(6)-(3-O-phospho-D-ribulosyl)-L-lysyl-[protein] + ADP + H(+). The enzyme catalyses N(6)-(D-erythrulosyl)-L-lysyl-[protein] + ATP = N(6)-(3-O-phospho-D-erythrulosyl)-L-lysyl-[protein] + ADP + H(+). Functionally, ketoamine kinase that phosphorylates ketoamines, such as erythruloselysine and ribuloselysine, on the third carbon of the sugar moiety to generate ketoamine 3-phosphate. Has higher activity on free lysine (erythruloselysine and ribuloselysine), than on ribuloselysine and erythruloselysine residues on glycated proteins. The chain is Probable ketoamine kinase SAOUHSC_02908 from Staphylococcus aureus (strain NCTC 8325 / PS 47).